We begin with the raw amino-acid sequence, 196 residues long: MTWQSDYSRDYEVKNHMECQNRSDKYIWSPHDAYFYKGLSELIVDIDRLIYLSLEKIRKDFVFINLSTDSLSEFINRDNEWLSAVKGKQVVLIAARKSEALANYWYYNSNIRGVVYAGLSRDIRKELAYVINGRFLRKDIKKDKITDREMEIIRMTAQGMQPKSIARIENCSVKTVYTHRRNAEAKLYSKIYKLVQ.

In terms of domain architecture, HTH luxR-type spans Lys138–Gln196. The segment at residues Pro162–Arg181 is a DNA-binding region (H-T-H motif).

The protein belongs to the EcpR/MatA family.

It is found in the cytoplasm. Functionally, part of the ecpRABCDE operon, which encodes the E.coli common pilus (ECP). ECP is found in both commensal and pathogenic strains and plays a dual role in early-stage biofilm development and host cell recognition. Positively regulates the expression of the ecp operon. This Escherichia coli O139:H28 (strain E24377A / ETEC) protein is HTH-type transcriptional regulator EcpR (ecpR).